The chain runs to 239 residues: Small ribosomal subunit protein uS3c (239 aa).

In terms of domain architecture, KH type-2 spans 43-139 (IKNYIQKNRK…RLNIGIEKVK (97 aa)).

It belongs to the universal ribosomal protein uS3 family. As to quaternary structure, part of the 30S ribosomal subunit.

Its subcellular location is the plastid. It is found in the chloroplast. The protein is Small ribosomal subunit protein uS3c (rps3) of Oryza nivara (Indian wild rice).